The sequence spans 401 residues: Nodal homolog 3-A (401 aa).

The N-terminal stretch at 1–18 is a signal peptide; the sequence is MAFLSLFLCLVFSSPLMA. Residues 19 to 274 constitute a propeptide that is removed on maturation; that stretch reads MPPALQGRKA…KVNGFRRLRR (256 aa). 3 N-linked (GlcNAc...) asparagine glycosylation sites follow: N168, N337, and N344. 2 disulfides stabilise this stretch: C299–C365 and C328–C396.

It belongs to the TGF-beta family. As to quaternary structure, monomer. The propeptide region interacts with bmp4 in a non-covalent manner. In terms of tissue distribution, expressed in the dorsal marginal region of late blastula, becoming restricted to the Spemann organizer at the early gastrula stage.

The protein localises to the secreted. In terms of biological role, exhibits mesoderm-dorsalizing activity and neural-inducing activity, but lacks mesoderm-inducing activity. Regulates the expression of specific mesodermal and neural genes. Induces convergent extension movements at the embryonic midline by activating the fgf signaling pathway to induce t/bra expression in the organizer region. Acts with wnt11 to induce Spemann organizer cells and induce axis formation. The unprocessed protein antagonizes bmp-signaling. The protein is Nodal homolog 3-A of Xenopus tropicalis (Western clawed frog).